We begin with the raw amino-acid sequence, 166 residues long: Myosin regulatory light chain 2, ventricular/cardiac muscle isoform (166 aa).

Ser2 carries the post-translational modification N,N,N-trimethylserine. A phosphoserine mark is found at Ser14, Ser15, and Ser19. 3 consecutive EF-hand domains span residues 24–59, 94–129, and 130–165; these read TQIQ…LGRV, DPEE…QAER, and FSKE…GEEK. The Ca(2+) site is built by Asp37, Asn39, Asp41, and Asp48. The residue at position 52 (Thr52) is a Phosphothreonine.

In terms of assembly, myosin is a hexamer of 2 heavy chains and 4 light chains. Interacts with MYOC. N-terminus is methylated by METTL11A/NTM1. In terms of processing, phosphorylated by MYLK3 and MYLK2; promotes cardiac muscle contraction and function. Dephosphorylated by PPP1CB complexed to PPP1R12B. The phosphorylated form in adult is expressed as gradients across the heart from endocardium (low phosphorylation) to epicardium (high phosphorylation); regulates cardiac torsion and workload distribution. Abundantly expressed in both cardiac and slow skeletal muscle (soleus), with no detectable expression in fast skeletal muscle (vastus lateralis) or non-muscle tissue.

It is found in the cytoplasm. It localises to the myofibril. Its subcellular location is the sarcomere. The protein localises to the a band. Its function is as follows. Contractile protein that plays a role in heart development and function. Following phosphorylation, plays a role in cross-bridge cycling kinetics and cardiac muscle contraction by increasing myosin lever arm stiffness and promoting myosin head diffusion; as a consequence of the increase in maximum contraction force and calcium sensitivity of contraction force. These events altogether slow down myosin kinetics and prolong duty cycle resulting in accumulated myosins being cooperatively recruited to actin binding sites to sustain thin filament activation as a means to fine-tune myofilament calcium sensitivity to force. During cardiogenesis plays an early role in cardiac contractility by promoting cardiac myofibril assembly. This is Myosin regulatory light chain 2, ventricular/cardiac muscle isoform from Rattus norvegicus (Rat).